Here is a 60-residue protein sequence, read N- to C-terminus: Large ribosomal subunit protein bL32 (60 aa).

The segment covering 1–20 (MAVPKRKTSPSRRNMRRSHH) has biased composition (basic residues). The segment at 1–60 (MAVPKRKTSPSRRNMRRSHHALGANSFIEDKDTGELRRPHHVDLKTGMYNGKQILTPKED) is disordered. Residues 28 to 44 (IEDKDTGELRRPHHVDL) are compositionally biased toward basic and acidic residues.

It belongs to the bacterial ribosomal protein bL32 family.

The polypeptide is Large ribosomal subunit protein bL32 (Caulobacter vibrioides (strain ATCC 19089 / CIP 103742 / CB 15) (Caulobacter crescentus)).